The sequence spans 177 residues: uncharacterized protein (177 aa).

This is an uncharacterized protein from Homo sapiens (Human).